The following is a 420-amino-acid chain: Tyrosine--tRNA ligase 2 (420 aa).

Tyr-34 provides a ligand contact to L-tyrosine. Residues 39–48 (PTGDSMHIGH) carry the 'HIGH' region motif. L-tyrosine-binding residues include Tyr-168 and Gln-172. The 'KMSKS' region signature appears at 230 to 234 (KFGKS). Residue Lys-233 coordinates ATP. In terms of domain architecture, S4 RNA-binding spans 352–418 (KNIVEWLVDL…GKKNYSLVKL (67 aa)).

It belongs to the class-I aminoacyl-tRNA synthetase family. TyrS type 1 subfamily. Homodimer.

It is found in the cytoplasm. The enzyme catalyses tRNA(Tyr) + L-tyrosine + ATP = L-tyrosyl-tRNA(Tyr) + AMP + diphosphate + H(+). Its function is as follows. Catalyzes the attachment of tyrosine to tRNA(Tyr) in a two-step reaction: tyrosine is first activated by ATP to form Tyr-AMP and then transferred to the acceptor end of tRNA(Tyr). In Bacillus cereus (strain ATCC 14579 / DSM 31 / CCUG 7414 / JCM 2152 / NBRC 15305 / NCIMB 9373 / NCTC 2599 / NRRL B-3711), this protein is Tyrosine--tRNA ligase 2.